The sequence spans 326 residues: MTAQAALATAANDGELRHDWSAEEIEALFALPFNDLMFEAQKVHRAHFDANRVQVSRLISIKTGSCPEDCSYCPQSAHYATGLEKEKLLAVEEVVESARQAKEEGASRFCMGAAWRGPKGDDFEVAVAMIEGVKALGMETCATFGLLDKWQAQRLKEAGLDYYNHNIDTSPEHYSEVITTRTFQDRLDTLDVVRDAGLHVCSGGIVGLGETRTDRARMIQTLANMPKHPDSVPINLLIPIQGTPLADAERPDSFDFIRTIAVARITMPKSFVRLSAGREGMTEEMQALCFLAGANSVFCGQKLLTAKNAAPGKDKSLFGKLGLQPM.

The Radical SAM core domain occupies 51-278 (NRVQVSRLIS…KSFVRLSAGR (228 aa)). [4Fe-4S] cluster-binding residues include Cys-66, Cys-70, and Cys-73. 4 residues coordinate [2Fe-2S] cluster: Cys-110, Cys-141, Cys-201, and Arg-273.

This sequence belongs to the radical SAM superfamily. Biotin synthase family. As to quaternary structure, homodimer. [4Fe-4S] cluster serves as cofactor. The cofactor is [2Fe-2S] cluster.

It carries out the reaction (4R,5S)-dethiobiotin + (sulfur carrier)-SH + 2 reduced [2Fe-2S]-[ferredoxin] + 2 S-adenosyl-L-methionine = (sulfur carrier)-H + biotin + 2 5'-deoxyadenosine + 2 L-methionine + 2 oxidized [2Fe-2S]-[ferredoxin]. It participates in cofactor biosynthesis; biotin biosynthesis; biotin from 7,8-diaminononanoate: step 2/2. In terms of biological role, catalyzes the conversion of dethiobiotin (DTB) to biotin by the insertion of a sulfur atom into dethiobiotin via a radical-based mechanism. The protein is Biotin synthase of Paramagnetospirillum magneticum (strain ATCC 700264 / AMB-1) (Magnetospirillum magneticum).